The primary structure comprises 413 residues: MTNQTVRGTKDLLFDEWYRFKYIQQIANRISSLYGFLPAQTPIFEYTEVFMKTLGDGSDIINKEMYTFYDKGGKSITLRPEFTAAIVRLLVEKKLQIPIKLFSTGPAFRYERPQKGRQRQFHQINFEVFGVENPKADIELISLAHHLLTEFNISKNVRLEINSLGDSETIAKYKEVLIPYFKKFQNDLSEDSQNRLTKNPLRILDSKDEKDKLIISDAPKISDYYTRESSDFFEQILNGLTALNIPCTVNSKLVRGLDYYCHTVFEFVIEDFGAQGAVFAGGRYDNLVSSVGGKYTPAIGFAGGIERIMELINYSMKGDRPICLVPIGREAEEHALTLANELRRNGLYVIYEYNGALKNRMKKASQANAKAALIFGNEELGSKTLKIKNMDTGEEKIIAYGNIMENIHQTLLV.

This sequence belongs to the class-II aminoacyl-tRNA synthetase family. In terms of assembly, homodimer.

Its subcellular location is the cytoplasm. It catalyses the reaction tRNA(His) + L-histidine + ATP = L-histidyl-tRNA(His) + AMP + diphosphate + H(+). The chain is Histidine--tRNA ligase from Wolbachia sp. subsp. Brugia malayi (strain TRS).